The sequence spans 473 residues: H(+)/Cl(-) exchange transporter ClcA (473 aa).

The Cytoplasmic portion of the chain corresponds to 1–32 (MKTDTPTFEAQQIVRLRRGRLIRRLVQRDKTP). Residues 33–69 (LAILLMAAVVGTLTGLVGVAFEKAVSWVQNMRIGALV) traverse the membrane as a helical segment. Over 70–76 (QVADHAF) the chain is Periplasmic. A helical transmembrane segment spans residues 77–100 (LLWPLAFILSALLAMVGYFLVRKF). The Selectivity filter part_1 signature appears at 106 to 110 (GSGIP). S107 contributes to the chloride binding site. The helical intramembrane region spans 109–116 (IPEIEGAL). Residues 117-123 (EELRPVR) lie on the Cytoplasmic side of the membrane. Transmembrane regions (helical) follow at residues 124 to 141 (WWRV…TLGA) and 148 to 166 (EGPT…LDVF). Residues 146-150 (GREGP) carry the Selectivity filter part_2 motif. At 167–176 (RMRSAEARHT) the chain is on the cytoplasmic side. 2 intramembrane regions (helical) span residues 177-189 (LLAT…LSAA) and 193-201 (PLAGILFII). Residues 202-214 (EEMRPQFRYNLIS) are Cytoplasmic-facing. Residues 215 to 232 (IKAVFTGVIMSSIVFRIF) form a helical membrane-spanning segment. Over 233-252 (NGEAPIIEVGKLSNAPVNTL) the chain is Periplasmic. Residues 253 to 281 (WLYLVLGIIFGCVGPVFNTLVLRTQDMFQ) traverse the membrane as a helical segment. Topologically, residues 282–287 (RFHGGE) are cytoplasmic. A helical membrane pass occupies residues 288–309 (IKKWVLMGGAIGGLCGILGLIE). The Periplasmic segment spans residues 310–329 (PEAAGGGFNLIPIAAAGNFS). The next 2 membrane-spanning stretches (helical) occupy residues 330 to 349 (VGLL…LCFS) and 355 to 376 (GIFA…MAAA). Positions 355-359 (GIFAP) match the Selectivity filter part_3 motif. Chloride is bound by residues I356 and F357. Topologically, residues 377 to 386 (VLFPQYHLEA) are periplasmic. Residues 387–401 (GTFAIAGMGALMAAS) constitute an intramembrane region (helical). Residues 402-404 (VRA) constitute an intramembrane region (note=Loop between two helices). The segment at residues 405–416 (PLTGIVLVLEMT) is an intramembrane region (helical). An intramembrane region (note=Loop between two helices) is located at residues 417–421 (DNYQL). The helical transmembrane segment at 422-438 (ILPMIITCLGATLLAQF) threads the bilayer. The Cytoplasmic portion of the chain corresponds to 439 to 473 (LGGKPLYSTILARTLAKQDAEQAAKNQSTPAGENT). Residue Y445 participates in chloride binding.

Belongs to the chloride channel (TC 2.A.49) family. ClcA subfamily. In terms of assembly, homodimer.

It is found in the cell inner membrane. The catalysed reaction is 2 chloride(in) + H(+)(out) = 2 chloride(out) + H(+)(in). In terms of biological role, proton-coupled chloride transporter. Functions as antiport system and exchanges two chloride ions for 1 proton. Probably acts as an electrical shunt for an outwardly-directed proton pump that is linked to amino acid decarboxylation, as part of the extreme acid resistance (XAR) response. This Salmonella arizonae (strain ATCC BAA-731 / CDC346-86 / RSK2980) protein is H(+)/Cl(-) exchange transporter ClcA.